The primary structure comprises 680 residues: E3 ubiquitin-protein ligase brl2 (680 aa).

Positions 44–72 (RSIQFDELESKIEGLQNLAEEKLKVLATL) form a coiled coil. Residues 206–233 (PQSTKVKEEATTSSKGKDEEKKVSTVEQ) form a disordered region. Over residues 210–229 (KVKEEATTSSKGKDEEKKVS) the composition is skewed to basic and acidic residues. 3 coiled-coil regions span residues 261-288 (LDSNVNEMDKLIMERENALNNVETTNLK), 353-399 (MQND…ETMV), and 485-609 (DSLH…LKDT). An RING-type zinc finger spans residues 627–667 (CSVCNFERWKDRIISLCGHGFCYQCIQKRIETRQRRCPICG).

This sequence belongs to the BRE1 family. As to quaternary structure, component of the histone H2B ubiquitin ligase complex (HULC) composed of at least brl1, brl2, rhp6 and shf1.

The protein localises to the nucleus. The catalysed reaction is S-ubiquitinyl-[E2 ubiquitin-conjugating enzyme]-L-cysteine + [acceptor protein]-L-lysine = [E2 ubiquitin-conjugating enzyme]-L-cysteine + N(6)-ubiquitinyl-[acceptor protein]-L-lysine.. It functions in the pathway protein modification; protein ubiquitination. Functionally, E3 ubiquitin-protein ligase which belongs to the histone H2B ubiquitin ligase complex (HULC) which mediates monoubiquitination of histone H2B to form H2BK123ub1. H2BK123ub1 gives a specific tag for epigenetic transcriptional activation and is also a prerequisite for H3K4me and H3K79me formation. The protein is E3 ubiquitin-protein ligase brl2 (brl2) of Schizosaccharomyces pombe (strain 972 / ATCC 24843) (Fission yeast).